The chain runs to 321 residues: Probable nucleosome assembly protein (321 aa).

The span at 272–298 (EENDYDFGEDFEDEEGEDDDEEDDEEE) shows a compositional bias: acidic residues. Residues 272–321 (EENDYDFGEDFEDEEGEDDDEEDDEEEQTIKKPSGKGKAQPQQPQDCKQQ) are disordered. Positions 311–321 (QPQQPQDCKQQ) are enriched in low complexity.

It belongs to the nucleosome assembly protein (NAP) family.

Its subcellular location is the nucleus. Its function is as follows. May modulate chromatin structure by regulation of histone octamer formation. This chain is Probable nucleosome assembly protein (nap1), found in Dictyostelium discoideum (Social amoeba).